Here is a 326-residue protein sequence, read N- to C-terminus: Beta-ketoacyl-[acyl-carrier-protein] synthase III (326 aa).

Catalysis depends on residues Cys-113 and His-253. Positions 254-258 (QANIR) are ACP-binding. Asn-283 is a catalytic residue.

It belongs to the thiolase-like superfamily. FabH family. In terms of assembly, homodimer.

Its subcellular location is the cytoplasm. It carries out the reaction malonyl-[ACP] + acetyl-CoA + H(+) = 3-oxobutanoyl-[ACP] + CO2 + CoA. Its pathway is lipid metabolism; fatty acid biosynthesis. Its function is as follows. Catalyzes the condensation reaction of fatty acid synthesis by the addition to an acyl acceptor of two carbons from malonyl-ACP. Catalyzes the first condensation reaction which initiates fatty acid synthesis and may therefore play a role in governing the total rate of fatty acid production. Possesses both acetoacetyl-ACP synthase and acetyl transacylase activities. Its substrate specificity determines the biosynthesis of branched-chain and/or straight-chain of fatty acids. This is Beta-ketoacyl-[acyl-carrier-protein] synthase III from Wolbachia sp. subsp. Brugia malayi (strain TRS).